Reading from the N-terminus, the 309-residue chain is tRNA dimethylallyltransferase (309 aa).

13-20 (GPTGAGKT) is an ATP binding site. 15–20 (TGAGKT) is a substrate binding site. Interaction with substrate tRNA stretches follow at residues 38–41 (DSRQ) and 162–166 (QRVTR).

The protein belongs to the IPP transferase family. In terms of assembly, monomer. Mg(2+) serves as cofactor.

It catalyses the reaction adenosine(37) in tRNA + dimethylallyl diphosphate = N(6)-dimethylallyladenosine(37) in tRNA + diphosphate. Catalyzes the transfer of a dimethylallyl group onto the adenine at position 37 in tRNAs that read codons beginning with uridine, leading to the formation of N6-(dimethylallyl)adenosine (i(6)A). This Nitratidesulfovibrio vulgaris (strain ATCC 29579 / DSM 644 / CCUG 34227 / NCIMB 8303 / VKM B-1760 / Hildenborough) (Desulfovibrio vulgaris) protein is tRNA dimethylallyltransferase.